A 746-amino-acid chain; its full sequence is EF-hand domain-containing family member C2 (746 aa).

3 consecutive DM10 domains span residues 75–182 (DKQV…RKMG), 226–367 (DGHV…RTKY), and 429–536 (ESNT…EKHA). The EF-hand domain maps to 557–592 (PRSREIRQVFAAADPQHTKVIEYDPFRNLIVSITDG).

It is found in the cytoplasm. Its subcellular location is the cytoskeleton. It localises to the cilium axoneme. Microtubule inner protein (MIP) part of the dynein-decorated doublet microtubules (DMTs) in cilia axoneme, which is required for motile cilia beating. This is EF-hand domain-containing family member C2 (EFHC2) from Gallus gallus (Chicken).